The following is a 214-amino-acid chain: Leucyl/phenylalanyl-tRNA--protein transferase (214 aa).

Residues 194 to 214 are disordered; the sequence is FAPPGYSPDPASVVQRSSQTS.

This sequence belongs to the L/F-transferase family.

The protein localises to the cytoplasm. It catalyses the reaction N-terminal L-lysyl-[protein] + L-leucyl-tRNA(Leu) = N-terminal L-leucyl-L-lysyl-[protein] + tRNA(Leu) + H(+). The enzyme catalyses N-terminal L-arginyl-[protein] + L-leucyl-tRNA(Leu) = N-terminal L-leucyl-L-arginyl-[protein] + tRNA(Leu) + H(+). The catalysed reaction is L-phenylalanyl-tRNA(Phe) + an N-terminal L-alpha-aminoacyl-[protein] = an N-terminal L-phenylalanyl-L-alpha-aminoacyl-[protein] + tRNA(Phe). In terms of biological role, functions in the N-end rule pathway of protein degradation where it conjugates Leu, Phe and, less efficiently, Met from aminoacyl-tRNAs to the N-termini of proteins containing an N-terminal arginine or lysine. This chain is Leucyl/phenylalanyl-tRNA--protein transferase, found in Cereibacter sphaeroides (strain ATCC 17025 / ATH 2.4.3) (Rhodobacter sphaeroides).